Consider the following 209-residue polypeptide: Orotate phosphoribosyltransferase (209 aa).

5-phospho-alpha-D-ribose 1-diphosphate-binding positions include arginine 96, lysine 100, histidine 102, and 122–130 (EDLISTGGS). Serine 126 is a binding site for orotate.

This sequence belongs to the purine/pyrimidine phosphoribosyltransferase family. PyrE subfamily. Homodimer. Mg(2+) is required as a cofactor.

The enzyme catalyses orotidine 5'-phosphate + diphosphate = orotate + 5-phospho-alpha-D-ribose 1-diphosphate. The protein operates within pyrimidine metabolism; UMP biosynthesis via de novo pathway; UMP from orotate: step 1/2. Functionally, catalyzes the transfer of a ribosyl phosphate group from 5-phosphoribose 1-diphosphate to orotate, leading to the formation of orotidine monophosphate (OMP). The protein is Orotate phosphoribosyltransferase of Streptococcus thermophilus (strain ATCC BAA-491 / LMD-9).